A 361-amino-acid polypeptide reads, in one-letter code: Serine/threonine-protein kinase SRK2I (361 aa).

The Protein kinase domain occupies Tyr22–Phe278. Residues Ile28 to Ala36 and Lys51 each bind ATP. The Proton acceptor role is filled by Asp141.

This sequence belongs to the protein kinase superfamily. Ser/Thr protein kinase family. In terms of assembly, interacts with ABI1. Interacts with I-2 and TOPP1. Interacts with FREE1 (via C-terminus). Autophosphorylated in vitro. As to expression, expressed at low levels in seeds, seedlings, roots (especially in tips), stems, leaves, shoots, flowers and siliques.

The enzyme catalyses L-seryl-[protein] + ATP = O-phospho-L-seryl-[protein] + ADP + H(+). It catalyses the reaction L-threonyl-[protein] + ATP = O-phospho-L-threonyl-[protein] + ADP + H(+). With respect to regulation, activated by autophosphorylation of its activation loop. Its function is as follows. Together with SRK2D, key component and activator of the abscisic acid (ABA) signaling pathway that regulates numerous ABA responses, such as seed germination, Pro accumulation, root growth inhibition, dormancy and seedling growth, and, to a lesser extent, stomatal closure. In response to ABA, phosphorylates the ESCRT-I complex component FREE1, which is required for ABA-induced FREE1 nuclear import. The chain is Serine/threonine-protein kinase SRK2I (SRK2I) from Arabidopsis thaliana (Mouse-ear cress).